Here is a 469-residue protein sequence, read N- to C-terminus: Probable glucuronoxylan glucuronosyltransferase F8H (469 aa).

Residues 1 to 36 lie on the Cytoplasmic side of the membrane; the sequence is MSLDIKKPNITKTKKKKTGFVVKMQLNNNRGGNKRN. Residues 37–57 form a helical; Signal-anchor for type II membrane protein membrane-spanning segment; it reads IFIFFFFRNYYTWILWFCLSL. The Lumenal segment spans residues 58–469; the sequence is YFFTSYFSVE…RVLSQREVDM (412 aa). 4 N-linked (GlcNAc...) asparagine glycosylation sites follow: Asn171, Asn203, Asn301, and Asn411.

This sequence belongs to the glycosyltransferase 47 family. In terms of tissue distribution, expressed in xylem cells in stems and in roots.

It is found in the golgi apparatus membrane. Functionally, involved in the synthesis of the hemicellulose glucuronoxylan, a major component of secondary cell walls. Probably involved in the synthesis of the glycosyl sequence at the glucuronoxylan reducing end. In Arabidopsis thaliana (Mouse-ear cress), this protein is Probable glucuronoxylan glucuronosyltransferase F8H (F8H).